The following is a 572-amino-acid chain: DBH-like monooxygenase protein 2 homolog (572 aa).

The N-terminal stretch at methionine 1–alanine 26 is a signal peptide. 4 N-linked (GlcNAc...) asparagine glycosylation sites follow: asparagine 8, asparagine 64, asparagine 187, and asparagine 203. Over glutamine 27–cysteine 552 the chain is Extracellular. Positions histidine 42–glycine 157 constitute a DOMON domain. Tyrosine 207 is an active-site residue. 2 disulfide bridges follow: cysteine 209/cysteine 256 and cysteine 244/cysteine 263. Residues histidine 237 and histidine 238 each coordinate Cu cation. Histidine 301 contacts Cu cation. Asparagine 306 carries N-linked (GlcNAc...) asparagine glycosylation. 2 disulfides stabilise this stretch: cysteine 358-cysteine 472 and cysteine 435-cysteine 457. Histidine 381 is a catalytic residue. Positions 381, 383, and 456 each coordinate Cu cation. Residues asparagine 468, asparagine 503, asparagine 518, and asparagine 534 are each glycosylated (N-linked (GlcNAc...) asparagine). Residues alanine 553–alanine 571 traverse the membrane as a helical segment. Residue serine 572 is a topological domain, cytoplasmic.

Belongs to the copper type II ascorbate-dependent monooxygenase family. Cu(2+) is required as a cofactor.

The protein localises to the membrane. This chain is DBH-like monooxygenase protein 2 homolog (moxd2), found in Danio rerio (Zebrafish).